A 152-amino-acid polypeptide reads, in one-letter code: Acidic phospholipase A2 homolog textilotoxin D chain (152 aa).

An N-terminal signal peptide occupies residues 1-19 (MHPAHLLVLLGVCVSLLGA). Intrachain disulfides connect Cys-38–Cys-104, Cys-54–Cys-151, Cys-56–Cys-72, Cys-71–Cys-132, Cys-78–Cys-125, Cys-88–Cys-118, and Cys-111–Cys-123. Asn-112 is a glycosylation site (N-linked (GlcNAc...) asparagine).

It belongs to the phospholipase A2 family. Group I subfamily. D49 sub-subfamily. In terms of assembly, heterohexamer. 2 forms exist: 2 A or 2 B chains, 2 C chains and 2 covalently-linked D chains, and 1 A or 1 B, 1 C, 2 covalently-linked D chains and 2 differentially glycosylated covalently-linked D chains. Textilotoxin was originally described as pentameric. In terms of tissue distribution, expressed by the venom gland.

It is found in the secreted. Functionally, snake venom oligomeric phospholipase A2 that has potent presynaptic neurotoxicity. Chain D is not itself neurotoxic, but it is essential for the neurotoxicity of textilotoxin. Chain D possesses a very low phospholipase activity. In Pseudonaja textilis (Eastern brown snake), this protein is Acidic phospholipase A2 homolog textilotoxin D chain.